A 677-amino-acid polypeptide reads, in one-letter code: MTNKRQILVTSALPYANGAIHLGHMVETIQTDIWVRFQKMQGHDCTYVCADDAHGTAIMLRAEQLGVTAEEQIAKVKADHEADFKDFLIGFDNYHSTHSEENKALSHLIYERVKANGHIAERSITQAFDPEKNLFLADRYIKGTCPKCGAEDQYGDNCENCSATYSPMELKNPRSVISGATPVAKESVHYFFTLPEFTGYLKEWTRAGHLQDEVANKLAEWLDAGLQEWDISRDAPYFGFEIPGAPGKYFYVWLDAPIGYMASFKQLCDRTGKDFDEYWKADSNCELYHFIGKDIVNFHALFWPALLSDAGFRTPTKVCVHGFLTVDGKKMSKSRGTFINARTYLDHLQPEYLRYYYAAKLTGSVDDIDLNLEDFVQRVNSDLVGKVVNIASRTAKFVQKAGGALSANIINEELWQSFVKAGDVIAAHYENRDYSKAMREIMALADLANEFIAEQAPWALAKQEGNEQKVLDVCSLGINCFRAIMTYLKPVLPQTAVAAEEFLGTELTWTGPLSFLGEHTINKFKPLMTRIEGEKIEAMINDSKEATAAMAKTIAEPAADSPLAKEPIADEIEFADFAKVDLRVALIANAEHVEGADKLLRLTLDLGGETRNVFAGIKSAYLPEDLIGKHTIMVANLKPRKMKFGMSEGMVLAAGPGGKELYILEPHEGALPGMRVM.

The 'HIGH' region motif lies at 14-24 (PYANGAIHLGH). Zn(2+)-binding residues include C145, C148, C158, and C161. Positions 330–334 (KMSKS) match the 'KMSKS' region motif. Position 333 (K333) interacts with ATP. In terms of domain architecture, tRNA-binding spans 576–677 (DFAKVDLRVA…EGALPGMRVM (102 aa)).

This sequence belongs to the class-I aminoacyl-tRNA synthetase family. MetG type 1 subfamily. As to quaternary structure, homodimer. Zn(2+) serves as cofactor.

The protein localises to the cytoplasm. It catalyses the reaction tRNA(Met) + L-methionine + ATP = L-methionyl-tRNA(Met) + AMP + diphosphate. Is required not only for elongation of protein synthesis but also for the initiation of all mRNA translation through initiator tRNA(fMet) aminoacylation. This is Methionine--tRNA ligase from Saccharophagus degradans (strain 2-40 / ATCC 43961 / DSM 17024).